The sequence spans 1528 residues: Multidrug resistance-associated protein 1 (1528 aa).

At 1–33 (MALRSFCSADGSDPLWDWNVTWHTSNPDFTKCF) the chain is on the extracellular side. Residue Asn-19 is glycosylated (N-linked (GlcNAc...) asparagine). Residues 34-54 (QNTVLTWVPCFYLWSCFPLYF) traverse the membrane as a helical segment. The Cytoplasmic portion of the chain corresponds to 55–74 (FYLSRHDRGYIQMTHLNKTK). A helical transmembrane segment spans residues 75-95 (TALGFFLWIICWADLFYSFWE). Residues 96 to 100 (RSQGV) are Extracellular-facing. The chain crosses the membrane as a helical span at residues 101-121 (LRAPVLLVSPTLLGITMLLAT). Over 122-133 (FLIQLERRKGVQ) the chain is Cytoplasmic. Residues 134–154 (SSGIMLTFWLVALLCALAILR) form a helical membrane-spanning segment. At 155 to 172 (SKIISALKKDAHVDVFRD) the chain is on the extracellular side. Residues 173–193 (STFYLYFTLVLVQLVLSCFSD) form a helical membrane-spanning segment. The Cytoplasmic segment spans residues 194-317 (CSPLFSETVH…KDREPSLFKV (124 aa)). At Tyr-277 the chain carries Phosphotyrosine. A Phosphoserine modification is found at Ser-290. A helical transmembrane segment spans residues 318 to 338 (LYKTFGPYFLMSFLYKALHDL). The ABC transmembrane type-1 1 domain occupies 326–609 (FLMSFLYKAL…LPMVISSIVQ (284 aa)). The Extracellular portion of the chain corresponds to 339 to 364 (MMFAGPKILELIINFVNDREAPDWQG). The helical transmembrane segment at 365 to 385 (YFYTALLFVSACLQTLALHQY) threads the bilayer. At 386–441 (FHICFVSGMRIKTAVVGAVYRKALLITNAARKSSTVGEIVNLMSVDAQRFMDLATY) the chain is on the cytoplasmic side. A helical membrane pass occupies residues 442–462 (INMIWSAPLQVILALYFLWLS). Residues 463-465 (LGP) lie on the Extracellular side of the membrane. Residues 466-486 (SVLAGVAVMILMVPLNAVMAM) form a helical membrane-spanning segment. Residues 487–548 (KTKTYQVAHM…VLKKSAYLAA (62 aa)) are Cytoplasmic-facing. Lys-504 is subject to N6-succinyllysine. The helical transmembrane segment at 549–569 (VGTFTWVCTPFLVALSTFAVF) threads the bilayer. Over 570-591 (VTVDERNILDAKKAFVSLALFN) the chain is Extracellular. A helical membrane pass occupies residues 592–612 (ILRFPLNILPMVISSIVQASV). Over 613-963 (SLKRLRIFLS…VQLSVYWNYM (351 aa)) the chain is Cytoplasmic. One can recognise an ABC transporter 1 domain in the interval 644-868 (ITVKNATFTW…DGAFAEFLRT (225 aa)). 678-685 (GQVGCGKS) provides a ligand contact to ATP. Disordered regions lie at residues 876-895 (LASE…PVEN) and 909-929 (RHLS…SSIA). Phosphoserine is present on residues Ser-878, Ser-882, Ser-912, and Ser-927. Positions 910-929 (HLSNSSSHSGDTSQQHSSIA) are enriched in polar residues. Residues 964-984 (KAIGLFITFLSIFLFLCNHVS) traverse the membrane as a helical segment. The 283-residue stretch at 971–1253 (TFLSIFLFLC…LVRMSSEMET (283 aa)) folds into the ABC transmembrane type-1 2 domain. Residues 985 to 1022 (ALASNYWLSLWTDDPPVVNGTQANRNFRLSVYGALGIL) are Extracellular-facing. A glycan (N-linked (GlcNAc...) asparagine) is linked at Asn-1003. Residues 1023 to 1043 (QGAAIFGYSMAVSIGGIFASR) traverse the membrane as a helical segment. At 1044–1086 (RLHLDLLYNVLRSPMSFFERTPSGNLVNRFSKELDTVDSMIPQ) the chain is on the cytoplasmic side. The helical transmembrane segment at 1087–1107 (VIKMFMGSLFSVIGAVIIILL) threads the bilayer. Position 1108 (Ala-1108) is a topological domain, extracellular. Residues 1109 to 1129 (TPIAAVIIPPLGLVYFFVQRF) traverse the membrane as a helical segment. Residues 1130–1200 (YVASSRQLKR…VANRWLAVRL (71 aa)) lie on the Cytoplasmic side of the membrane. The chain crosses the membrane as a helical span at residues 1201-1221 (ECVGNCIVLFAALFAVISRHS). The Extracellular portion of the chain corresponds to 1222–1223 (LS). A helical transmembrane segment spans residues 1224–1244 (AGLVGLSVSYSLQITAYLNWL). Topologically, residues 1245-1528 (VRMSSEMETN…YSMAKDAGLV (284 aa)) are cytoplasmic. In terms of domain architecture, ABC transporter 2 spans 1290 to 1524 (VEFRDYCLRY…RGIFYSMAKD (235 aa)). An ATP-binding site is contributed by 1324–1331 (GRTGAGKS).

It belongs to the ABC transporter superfamily. ABCC family. Conjugate transporter (TC 3.A.1.208) subfamily.

Its subcellular location is the cell membrane. It is found in the basolateral cell membrane. The enzyme catalyses ATP + H2O + xenobioticSide 1 = ADP + phosphate + xenobioticSide 2.. The catalysed reaction is an S-substituted glutathione(in) + ATP + H2O = an S-substituted glutathione(out) + ADP + phosphate + H(+). It catalyses the reaction leukotriene C4(in) + ATP + H2O = leukotriene C4(out) + ADP + phosphate + H(+). It carries out the reaction sphing-4-enine 1-phosphate(in) + ATP + H2O = sphing-4-enine 1-phosphate(out) + ADP + phosphate + H(+). The enzyme catalyses 17beta-estradiol 17-O-(beta-D-glucuronate)(in) + ATP + H2O = 17beta-estradiol 17-O-(beta-D-glucuronate)(out) + ADP + phosphate + H(+). The catalysed reaction is vincristine(in) + ATP + H2O = vincristine(out) + ADP + phosphate + H(+). It catalyses the reaction daunorubicin(in) + ATP + H2O = daunorubicin(out) + ADP + phosphate + H(+). It carries out the reaction 2',3'-cGAMP(in) + ATP + H2O = 2',3'-cGAMP(out) + ADP + phosphate + H(+). The enzyme catalyses S-[(2E,6E,10E)-geranylgeranyl]-L-glutathione(in) + ATP + H2O = S-[(2E,6E,10E)-geranylgeranyl]-L-glutathione(out) + ADP + phosphate + H(+). The catalysed reaction is prostaglandin A2-S-(R)-glutathione(in) + ATP + H2O = prostaglandin A2-S-(R)-glutathione(out) + ADP + phosphate + H(+). It catalyses the reaction prostaglandin A2-S-(S)-glutathione(in) + ATP + H2O = prostaglandin A2-S-(S)-glutathione(out) + ADP + phosphate + H(+). MK 571 inhibits sphingosine 1-phosphate and leukotriene C4 export. In terms of biological role, mediates export of organic anions and drugs from the cytoplasm. Mediates ATP-dependent transport of glutathione and glutathione conjugates, leukotriene C4, estradiol-17-beta-o-glucuronide, methotrexate, antiviral drugs and other xenobiotics. Confers resistance to anticancer drugs by decreasing accumulation of drugs in cells, and by mediating ATP- and GSH-dependent drug export. Hydrolyzes ATP with low efficiency. Catalyzes the export of sphingosine 1-phosphate from mast cells independently of their degranulation. Participates in inflammatory response by allowing export of leukotriene C4 from leukotriene C4-synthesizing cells. Mediates ATP-dependent, GSH-independent cyclic GMP-AMP (cGAMP) export. Thus, by limiting intracellular cGAMP concentrations negatively regulates the cGAS-STING pathway. Exports S-geranylgeranyl-glutathione (GGG) in lymphoid cells and stromal compartments of lymphoid organs. ABCC1 (via extracellular transport) with GGT5 (via GGG catabolism) establish GGG gradients within lymphoid tissues to position P2RY8-positive lymphocytes at germinal centers in lymphoid follicles and restrict their chemotactic transmigration from blood vessels to the bone marrow parenchyma. Mediates basolateral export of GSH-conjugated R- and S-prostaglandin A2 diastereomers in polarized epithelial cells. The polypeptide is Multidrug resistance-associated protein 1 (Mus musculus (Mouse)).